The sequence spans 180 residues: Der GTPase-activating protein YihI (180 aa).

Disordered stretches follow at residues 1–88 and 147–180; these read MTRK…KERR and PEVTEEAPVRKGAKTDEDLLDQFENMDLDSFGKE. Composition is skewed to basic and acidic residues over residues 18 to 33, 50 to 67, 77 to 88, and 153 to 163; these read FREKSTTQVDVEARKS, EALDPKHYANGQKKDPRL, VEKKPTTKKERR, and APVRKGAKTDE. A compositionally biased stretch (acidic residues) spans 164 to 173; the sequence is DLLDQFENMD.

This sequence belongs to the YihI family. As to quaternary structure, interacts with Der.

A GTPase-activating protein (GAP) that modifies Der/EngA GTPase function. May play a role in ribosome biogenesis. The sequence is that of Der GTPase-activating protein YihI from Photobacterium profundum (strain SS9).